We begin with the raw amino-acid sequence, 442 residues long: Putative ammonium transporter sll1017 (442 aa).

The next 13 membrane-spanning stretches (helical) occupy residues 5-25 (NFPLARYVLGAMLAFLFVGVA), 44-64 (LFLLAAAVLVLFMQAGFAMLE), 81-101 (TFDVCVGVLLYFLFGYSLMYG), 104-124 (PVLGGFFGWGGFGITNNLDNV), 133-153 (WLFQAAFAATAATIVSGAVMG), 155-175 (MYFKAYLIYSAVITGLVYPIS), 193-213 (FAGSLLVHSVGGFAALAAVVV), 240-260 (GVFILWVGWYGFNPGSQLAFV), 269-289 (MLIAVNTTLSAAAGGLAALAF), 299-319 (PNLLVTLNGILGGLVGITAGC), 325-345 (WSAIAIGVVAGILSVLGTKLL), 354-374 (VGAWPVHGLCGIWGGIAVGIF), and 386-406 (IVGSLVIPFWAFITMFFLFYV).

The protein belongs to the ammonia transporter channel (TC 1.A.11.2) family.

Its subcellular location is the cell membrane. The chain is Putative ammonium transporter sll1017 from Synechocystis sp. (strain ATCC 27184 / PCC 6803 / Kazusa).